Reading from the N-terminus, the 418-residue chain is Serine--tRNA ligase (418 aa).

Residue 226–228 coordinates L-serine; it reads TSE. ATP-binding positions include 257–259 and Val273; that span reads RRE. Residue Glu280 participates in L-serine binding. Position 344 to 347 (344 to 347) interacts with ATP; that stretch reads ELTS. Thr379 is a binding site for L-serine.

It belongs to the class-II aminoacyl-tRNA synthetase family. Type-1 seryl-tRNA synthetase subfamily. In terms of assembly, homodimer. The tRNA molecule binds across the dimer.

It is found in the cytoplasm. The catalysed reaction is tRNA(Ser) + L-serine + ATP = L-seryl-tRNA(Ser) + AMP + diphosphate + H(+). It catalyses the reaction tRNA(Sec) + L-serine + ATP = L-seryl-tRNA(Sec) + AMP + diphosphate + H(+). The protein operates within aminoacyl-tRNA biosynthesis; selenocysteinyl-tRNA(Sec) biosynthesis; L-seryl-tRNA(Sec) from L-serine and tRNA(Sec): step 1/1. Catalyzes the attachment of serine to tRNA(Ser). Is also able to aminoacylate tRNA(Sec) with serine, to form the misacylated tRNA L-seryl-tRNA(Sec), which will be further converted into selenocysteinyl-tRNA(Sec). The sequence is that of Serine--tRNA ligase from Mycobacteroides abscessus (strain ATCC 19977 / DSM 44196 / CCUG 20993 / CIP 104536 / JCM 13569 / NCTC 13031 / TMC 1543 / L948) (Mycobacterium abscessus).